The primary structure comprises 88 residues: Apolipoprotein C-I (88 aa).

The N-terminal stretch at 1–26 is a signal peptide; that stretch reads MRLILSLPVLAVVLAMVLEGPAPAQA.

It belongs to the apolipoprotein C1 family.

Its subcellular location is the secreted. Its function is as follows. Inhibitor of lipoprotein binding to the low density lipoprotein (LDL) receptor, LDL receptor-related protein, and very low density lipoprotein (VLDL) receptor. Associates with high density lipoproteins (HDL) and the triacylglycerol-rich lipoproteins in the plasma and makes up about 10% of the protein of the VLDL and 2% of that of HDL. Appears to interfere directly with fatty acid uptake and is also the major plasma inhibitor of cholesteryl ester transfer protein (CETP). Binds free fatty acids and reduces their intracellular esterification. Modulates the interaction of APOE with beta-migrating VLDL and inhibits binding of beta-VLDL to the LDL receptor-related protein. The sequence is that of Apolipoprotein C-I (APOC1) from Eidolon helvum (Straw-colored fruit bat).